A 241-amino-acid polypeptide reads, in one-letter code: ATP synthase subunit a (241 aa).

7 helical membrane-spanning segments follow: residues 27–47, 52–72, 87–107, 112–132, 142–162, 175–195, and 198–218; these read NCSLVMVLASVSSILLLCWAL, VVPGPSQTAVELIYGFVANTL, VMTTFLFVLACNLVGILPFGF, HLSVTLALSLVVCTAITVIGF, IFLPEGTPLWLAPMMVFIKLF, LAANMIAGHTIIAVIADFVLK, and LVLAPLPFAFIMGLIAFEIFV.

The protein belongs to the ATPase A chain family. F-type ATPases have 2 components, CF(1) - the catalytic core - and CF(0) - the membrane proton channel. CF(1) has five subunits: alpha(3), beta(3), gamma(1), delta(1), epsilon(1). CF(0) has three main subunits: a(1), b(2) and c(9-12). The alpha and beta chains form an alternating ring which encloses part of the gamma chain. CF(1) is attached to CF(0) by a central stalk formed by the gamma and epsilon chains, while a peripheral stalk is formed by the delta and b chains.

Its subcellular location is the cell inner membrane. Its function is as follows. Key component of the proton channel; it plays a direct role in the translocation of protons across the membrane. The polypeptide is ATP synthase subunit a (Anaplasma marginale (strain St. Maries)).